The chain runs to 286 residues: MWQAISRLLSEQLGEGEIELRNELPGGEVHAAWHLRYAGHDFFVKCDERELLPGFTAEADQLELLSRSKTVTVPKVWAVGADRDYSFLVMDYLPPRPLDAHSAFILGQQIARLHQWSDQPQFGLDFDNSLSTTPQPNTWQRRWSTFFAEQRIGWQLELAAEKGIAFGNIDAIVEHIQQRLASHQPQPSLLHGDLWSGNCALGPDGPYIFDPACYWGDRECDLAMLPLHTEQPPQIYDGYQSVSPLPADFLERQPVYQLYTLLNRARLFGGQHLVIAQQSLDRLLAA.

Asp91 to Leu93 lines the ATP pocket. Asp193 acts as the Proton acceptor in catalysis.

The protein belongs to the fructosamine kinase family.

Its function is as follows. Ketoamine kinase that phosphorylates ketoamines on the third carbon of the sugar moiety to generate ketoamine 3-phosphate. The polypeptide is Probable ketoamine kinase YniA (yniA) (Escherichia coli O157:H7).